Reading from the N-terminus, the 520-residue chain is Genome polyprotein (520 aa).

S2 bears the N-acetylserine; by host mark. The tract at residues 2–23 (STNPKPQRKTKRNTNRRPQDVK) is interaction with STAT1. Residues 2–58 (STNPKPQRKTKRNTNRRPQDVKFPGGGQIVGGVYLLTRRGPRLGVRATRKTSERSQP) are interaction with EIF2AK2/PKR. The interval 2–59 (STNPKPQRKTKRNTNRRPQDVKFPGGGQIVGGVYLLTRRGPRLGVRATRKTSERSQPR) is interaction with DDX3X. Residues 2 to 75 (STNPKPQRKT…PKARRPEGRA (74 aa)) form a disordered region. The Cytoplasmic segment spans residues 2-168 (STNPKPQRKT…EDGVNYATGN (167 aa)). 2 short sequence motifs (nuclear localization signal) span residues 5 to 13 (PKPQRKTKR) and 38 to 43 (TRRGPR). A compositionally biased stretch (basic residues) spans 7 to 16 (PQRKTKRNTN). S53 is modified (phosphoserine; by host). 2 short sequence motifs (nuclear localization signal) span residues 58-64 (PRGRRQP) and 66-71 (PKARRP). Positions 58–68 (PRGRRQPIPKA) are enriched in basic residues. S99 is modified (phosphoserine; by host). The important for endoplasmic reticulum and mitochondrial localization stretch occupies residues 112-152 (PRRRSRNLGKVIDTLTCGFADLMGYIPLVGAPLGGASRALA). S116 carries the phosphoserine; by host PKA modification. The tract at residues 122–173 (VIDTLTCGFADLMGYIPLVGAPLGGASRALAHGVRVLEDGVNYATGNLPGCS) is interaction with APOA2. Positions 164–167 (YATG) are important for lipid droplets localization. The helical transmembrane segment at 169–189 (LPGCSFSIFLSALMSCLTTPA) threads the bilayer. A propeptide spans 178–191 (LSALMSCLTTPASA) (ER anchor for the core protein, removed in mature form by host signal peptidase). Over 190-358 (SAYEVRNVSG…AGAHWGVLAG (169 aa)) the chain is Lumenal. 4 N-linked (GlcNAc...) asparagine; by host glycosylation sites follow: N196, N209, N234, and N250. The tract at residues 265–296 (LVGAATLCSAMYVGDLCGSVFLVSQLFTFSPR) is important for fusion. N305 carries N-linked (GlcNAc...) asparagine; by host glycosylation. The helical transmembrane segment at 359-379 (LAYYSMVGNWAKVLIVMLLFA) threads the bilayer. Topologically, residues 380–520 (GVDGANTHTV…TPSPVVVGTT (141 aa)) are lumenal. Residues 385-411 (NTHTVGGTEGFATQRLTSLFALGPSQK) form an HVR1 region. A glycan (N-linked (GlcNAc...) asparagine; by host) is linked at N418. 3 N-linked (GlcNAc...) (high mannose) asparagine; by host glycosylation sites follow: N424, N431, and N449. An intrachain disulfide couples C453 to C460. An HVR2 region spans residues 474–479 (TYAEPS). Residues 480-493 (ISEQRPYCWHYAPR) form a CD81-binding 1 region. 2 disulfides stabilise this stretch: C487/C495 and C504/C509.

The protein belongs to the hepacivirus polyprotein family. In terms of assembly, homooligomer. Interacts with E1 (via C-terminus). Interacts with the non-structural protein 5A. Interacts (via N-terminus) with host STAT1 (via SH2 domain); this interaction results in decreased STAT1 phosphorylation and ubiquitin-mediated proteasome-dependent STAT1 degradation, leading to decreased IFN-stimulated gene transcription. Interacts with host STAT3; this interaction constitutively activates STAT3. Interacts with host LTBR receptor. Interacts with host TNFRSF1A receptor and possibly induces apoptosis. Interacts with host HNRPK. Interacts with host YWHAE. Interacts with host UBE3A/E6AP. Interacts with host DDX3X. Interacts with host APOA2. Interacts with host RXRA protein. Interacts with host SP110 isoform 3/Sp110b; this interaction sequesters the transcriptional corepressor SP110 away from the nucleus. Interacts with host CREB3 nuclear transcription protein; this interaction triggers cell transformation. Interacts with host ACY3. Interacts with host C1QR1. Interacts with host RBM24; this interaction, which enhances the interaction of the mature core protein with 5'-UTR, may inhibit viral translation and favor replication. Interacts with host EIF2AK2/PKR; this interaction induces the autophosphorylation of EIF2AK2. Part of the viral assembly initiation complex composed of NS2, E1, E2, NS3, NS4A, NS5A and the mature core protein. Forms a heterodimer with envelope glycoprotein E2. Interacts with mature core protein. Interacts with protease NS2. The heterodimer E1/E2 interacts with host CLDN1; this interaction plays a role in viral entry into host cell. Interacts with host SPSB2 (via C-terminus). Part of the viral assembly initiation complex composed of NS2, E1, E2, NS3, NS4A, NS5A and the mature core protein. As to quaternary structure, forms a heterodimer with envelope glycoprotein E1. Interacts with host CD81 and SCARB1 receptors; these interactions play a role in viral entry into host cell. Interacts with host EIF2AK2/PKR; this interaction inhibits EIF2AK2 and probably allows the virus to evade the innate immune response. Interacts with host CD209/DC-SIGN and CLEC4M/DC-SIGNR. Interact with host SPCS1; this interaction is essential for viral particle assembly. Interacts with protease NS2. The heterodimer E1/E2 interacts with host CLDN1; this interaction plays a role in viral entry into host cell. Part of the viral assembly initiation complex composed of NS2, E1, E2, NS3, NS4A, NS5A and the mature core protein. Post-translationally, specific enzymatic cleavages in vivo yield mature proteins. The structural proteins, core, E1, E2 and p7 are produced by proteolytic processing by host signal peptidases. The core protein precursor is synthesized as a 23 kDa, which is retained in the ER membrane through the hydrophobic signal peptide. Cleavage by the signal peptidase releases the 21 kDa mature core protein. The cleavage of the core protein precursor occurs between aminoacids 176 and 188 but the exact cleavage site is not known. Some degraded forms of the core protein appear as well during the course of infection. The other proteins (p7, NS2, NS3, NS4A, NS4B, NS5A and NS5B) are cleaved by the viral proteases. Autoprocessing between NS2 and NS3 is mediated by the NS2 cysteine protease catalytic domain and regulated by the NS3 N-terminal domain. In terms of processing, phosphorylated by host PKC and PKA. Ubiquitinated; mediated by UBE3A and leading to core protein subsequent proteasomal degradation. Post-translationally, highly N-glycosylated.

The protein localises to the host endoplasmic reticulum membrane. It is found in the host mitochondrion membrane. The protein resides in the virion. Its subcellular location is the host cytoplasm. It localises to the host nucleus. The protein localises to the host lipid droplet. It is found in the virion membrane. Its function is as follows. Packages viral RNA to form a viral nucleocapsid, and promotes virion budding. Participates in the viral particle production as a result of its interaction with the non-structural protein 5A. Binds RNA and may function as a RNA chaperone to induce the RNA structural rearrangements taking place during virus replication. Modulates viral translation initiation by interacting with viral IRES and 40S ribosomal subunit. Affects various cell signaling pathways, host immunity and lipid metabolism. Prevents the establishment of cellular antiviral state by blocking the interferon-alpha/beta (IFN-alpha/beta) and IFN-gamma signaling pathways and by blocking the formation of phosphorylated STAT1 and promoting ubiquitin-mediated proteasome-dependent degradation of STAT1. Activates STAT3 leading to cellular transformation. Regulates the activity of cellular genes, including c-myc and c-fos. May repress the promoter of p53, and sequester CREB3 and SP110 isoform 3/Sp110b in the cytoplasm. Represses cell cycle negative regulating factor CDKN1A, thereby interrupting an important check point of normal cell cycle regulation. Targets transcription factors involved in the regulation of inflammatory responses and in the immune response: suppresses TNF-induced NF-kappa-B activation, and activates AP-1. Binds to dendritic cells (DCs) via C1QR1, resulting in down-regulation of T-lymphocytes proliferation. Alters lipid metabolism by interacting with hepatocellular proteins involved in lipid accumulation and storage. Induces up-regulation of FAS promoter activity, and thereby contributes to the increased triglyceride accumulation in hepatocytes (steatosis). Forms a heterodimer with envelope glycoprotein E2, which mediates virus attachment to the host cell, virion internalization through clathrin-dependent endocytosis and fusion with host membrane. Fusion with the host cell is most likely mediated by both E1 and E2, through conformational rearrangements of the heterodimer required for fusion rather than a classical class II fusion mechanism. E1/E2 heterodimer binds host apolipoproteins such as APOB and ApoE thereby forming a lipo-viro-particle (LVP). APOE associated to the LVP allows the initial virus attachment to cell surface receptors such as the heparan sulfate proteoglycans (HSPGs), syndecan-1 (SDC1), syndecan-1 (SDC2), the low-density lipoprotein receptor (LDLR) and scavenger receptor class B type I (SCARB1). The cholesterol transfer activity of SCARB1 allows E2 exposure and binding of E2 to SCARB1 and the tetraspanin CD81. E1/E2 heterodimer binding on CD81 activates the epithelial growth factor receptor (EGFR) signaling pathway. Diffusion of the complex E1-E2-EGFR-SCARB1-CD81 to the cell lateral membrane allows further interaction with Claudin 1 (CLDN1) and occludin (OCLN) to finally trigger HCV entry. Functionally, forms a heterodimer with envelope glycoprotein E1, which mediates virus attachment to the host cell, virion internalization through clathrin-dependent endocytosis and fusion with host membrane. Fusion with the host cell is most likely mediated by both E1 and E2, through conformational rearrangements of the heterodimer required for fusion rather than a classical class II fusion mechanism. The interaction between envelope glycoprotein E2 and host apolipoprotein E/APOE allows the proper assembly, maturation and infectivity of the viral particles. This interaction is probably promoted via the up-regulation of cellular autophagy by the virus. E1/E2 heterodimer binds host apolipoproteins such as APOB and APOE thereby forming a lipo-viro-particle (LVP). APOE associated to the LVP allows the initial virus attachment to cell surface receptors such as the heparan sulfate proteoglycans (HSPGs), syndecan-1 (SDC1), syndecan-1 (SDC2), the low-density lipoprotein receptor (LDLR) and scavenger receptor class B type I (SCARB1). The cholesterol transfer activity of SCARB1 allows E2 exposure and binding of E2 to SCARB1 and the tetraspanin CD81. E1/E2 heterodimer binding on CD81 activates the epithelial growth factor receptor (EGFR) signaling pathway. Diffusion of the complex E1-E2-EGFR-SCARB1-CD81 to the cell lateral membrane allows further interaction with Claudin 1 (CLDN1) and occludin (OCLN) to finally trigger HCV entry. Inhibits host EIF2AK2/PKR activation, preventing the establishment of an antiviral state. Viral ligand for CD209/DC-SIGN and CLEC4M/DC-SIGNR, which are respectively found on dendritic cells (DCs), and on liver sinusoidal endothelial cells and macrophage-like cells of lymph node sinuses. These interactions allow the capture of circulating HCV particles by these cells and subsequent facilitated transmission to permissive cells such as hepatocytes and lymphocyte subpopulations. In Hepatitis C virus (isolate HCV-KF) (HCV), this protein is Genome polyprotein.